Here is a 132-residue protein sequence, read N- to C-terminus: Profilin-1 (132 aa).

Belongs to the profilin family. In terms of assembly, occurs in many kinds of cells as a complex with monomeric actin in a 1:1 ratio. As to expression, expressed in the nerve ring during late embryonic stages. In adults, expression is seen in the neurons, vulva and somatic gonad.

It localises to the cytoplasm. Its subcellular location is the cytoskeleton. In terms of biological role, binds to actin and affects the structure of the cytoskeleton. At high concentrations, profilin prevents the polymerization of actin, whereas it enhances it at low concentrations. By binding to PIP2, it inhibits the formation of IP3 and DG. Also binds to poly(L-proline) and phosphatidylinositol 4,5-bisphosphate micelles. The sequence is that of Profilin-1 (pfn-1) from Caenorhabditis elegans.